Reading from the N-terminus, the 398-residue chain is Phosphoglycerate kinase (398 aa).

Substrate is bound by residues 21 to 23 (DFN), Arg-36, 59 to 62 (HLGR), Arg-119, and Arg-157. Residues Lys-208, Gly-296, Glu-327, and 354 to 357 (GGDS) each bind ATP.

The protein belongs to the phosphoglycerate kinase family. In terms of assembly, monomer.

The protein localises to the cytoplasm. It carries out the reaction (2R)-3-phosphoglycerate + ATP = (2R)-3-phospho-glyceroyl phosphate + ADP. The protein operates within carbohydrate degradation; glycolysis; pyruvate from D-glyceraldehyde 3-phosphate: step 2/5. The polypeptide is Phosphoglycerate kinase (Streptococcus agalactiae serotype Ia (strain ATCC 27591 / A909 / CDC SS700)).